The chain runs to 657 residues: Translation factor GUF1, mitochondrial (657 aa).

The transit peptide at 1 to 39 (MRGCLQSVKWLTSALRPSQSLASSTRYPRRLLSTSAPRN) directs the protein to the mitochondrion. Residues 59–239 (ERFRNFCIVA…TVIEQIPAPV (181 aa)) enclose the tr-type G domain. GTP is bound by residues 109 to 116 (TVKAQTCS), 173 to 177 (LAFAE), and 227 to 230 (LLPT).

The protein belongs to the TRAFAC class translation factor GTPase superfamily. Classic translation factor GTPase family. LepA subfamily.

The protein resides in the mitochondrion inner membrane. The enzyme catalyses GTP + H2O = GDP + phosphate + H(+). Functionally, promotes mitochondrial protein synthesis. May act as a fidelity factor of the translation reaction, by catalyzing a one-codon backward translocation of tRNAs on improperly translocated ribosomes. Binds to mitochondrial ribosomes in a GTP-dependent manner. This chain is Translation factor GUF1, mitochondrial, found in Ajellomyces capsulatus (strain NAm1 / WU24) (Darling's disease fungus).